A 240-amino-acid chain; its full sequence is UDP-2,3-diacylglucosamine hydrolase (240 aa).

Aspartate 8, histidine 10, aspartate 41, asparagine 79, and histidine 114 together coordinate Mn(2+). Asparagine 79–arginine 80 is a binding site for substrate. Substrate is bound by residues aspartate 122, serine 160, threonine 164, lysine 167, and histidine 195. 2 residues coordinate Mn(2+): histidine 195 and histidine 197.

The protein belongs to the LpxH family. It depends on Mn(2+) as a cofactor.

It is found in the cell inner membrane. The enzyme catalyses UDP-2-N,3-O-bis[(3R)-3-hydroxytetradecanoyl]-alpha-D-glucosamine + H2O = 2-N,3-O-bis[(3R)-3-hydroxytetradecanoyl]-alpha-D-glucosaminyl 1-phosphate + UMP + 2 H(+). It participates in glycolipid biosynthesis; lipid IV(A) biosynthesis; lipid IV(A) from (3R)-3-hydroxytetradecanoyl-[acyl-carrier-protein] and UDP-N-acetyl-alpha-D-glucosamine: step 4/6. Hydrolyzes the pyrophosphate bond of UDP-2,3-diacylglucosamine to yield 2,3-diacylglucosamine 1-phosphate (lipid X) and UMP by catalyzing the attack of water at the alpha-P atom. Involved in the biosynthesis of lipid A, a phosphorylated glycolipid that anchors the lipopolysaccharide to the outer membrane of the cell. This Pseudomonas paraeruginosa (strain DSM 24068 / PA7) (Pseudomonas aeruginosa (strain PA7)) protein is UDP-2,3-diacylglucosamine hydrolase.